The sequence spans 267 residues: 2-keto-3-deoxy-L-rhamnonate aldolase (267 aa).

His-49 acts as the Proton acceptor in catalysis. Gln-151 is a substrate binding site. Glu-153 provides a ligand contact to Mg(2+). The substrate site is built by Ala-178 and Asp-179. Asp-179 contacts Mg(2+).

The protein belongs to the HpcH/HpaI aldolase family. KDR aldolase subfamily. Homohexamer. The cofactor is Mg(2+).

The enzyme catalyses 2-dehydro-3-deoxy-L-rhamnonate = (S)-lactaldehyde + pyruvate. Functionally, catalyzes the reversible retro-aldol cleavage of 2-keto-3-deoxy-L-rhamnonate (KDR) to pyruvate and lactaldehyde. In Shigella sonnei (strain Ss046), this protein is 2-keto-3-deoxy-L-rhamnonate aldolase.